A 926-amino-acid polypeptide reads, in one-letter code: Progesterone receptor (926 aa).

A disordered region spans residues 1 to 48 (MTELQAKDPQVLHTSGASPSPPHIGSPLLARLDSGPFQGSQHSDVSSV). The segment at 1–165 (MTELQAKDPQ…PATKGLLSPL (165 aa)) is AF3; mediates transcriptional activation (in isoform B). Residues 1–559 (MTELQAKDPQ…YGFDSLPQKI (559 aa)) form a modulating, Pro-Rich region. A Glycyl lysine isopeptide (Lys-Gly) (interchain with G-Cter in SUMO) cross-link involves residue lysine 7. Position 20 is a phosphoserine (serine 20). The LXXL motif 1 signature appears at 56–60 (LDGLL). A Phosphoserine modification is found at serine 82. The LXXL motif 1 signature appears at 116-120 (LDSLL). Phosphoserine is present on residues serine 131 and serine 163. Positions 166 to 305 (MSRPEIKAGD…LATTVVDFIH (140 aa)) are mediates transcriptional transrepression (in isoform A). A disordered region spans residues 168-256 (RPEIKAGDSS…GTGSGGGVAA (89 aa)). A Nuclear localization signal motif is present at residues 184 to 188 (KVLPK). A phosphoserine mark is found at serine 191 and serine 214. Position 294 is a phosphoserine; by MAPK1 (serine 294). Positions 327 to 364 (DSYDGGATAQGPFAPPRGSPSAPSPPVPCGDFPDCTYP) are disordered. Pro residues predominate over residues 339-354 (FAPPRGSPSAPSPPVP). At serine 345 the chain carries Phosphoserine; by MAPK. A Glycyl lysine isopeptide (Lys-Gly) (interchain with G-Cter in SUMO); alternate cross-link involves residue lysine 388. Residue lysine 388 forms a Glycyl lysine isopeptide (Lys-Gly) (interchain with G-Cter in ubiquitin); alternate linkage. The segment at 391–447 (EEGADAAVRSPRPYLSAGASSSTFPDFPLAPAPQRAPSSRPGEAAVAGGPSSAAVSP) is disordered. Serine 400 bears the Phosphoserine; by CDK2 mark. Over residues 422–447 (APQRAPSSRPGEAAVAGGPSSAAVSP) the composition is skewed to low complexity. An AF1; mediates transcriptional activation region spans residues 453–539 (SALECILYKA…VYPPYLNYLR (87 aa)). Lysine 524 participates in a covalent cross-link: Glycyl lysine isopeptide (Lys-Gly) (interchain with G-Cter in SUMO). The segment at residues 557-632 (QKICLICGDE…AGMVLGGRKF (76 aa)) is a DNA-binding region (nuclear receptor). NR C4-type zinc fingers lie at residues 560–580 (CLIC…CGSC) and 596–615 (CAGR…CPAC). The residue at position 669 (serine 669) is a Phosphoserine. The 235-residue stretch at 672-906 (QEIQLVPPLI…EFPEMMSEVI (235 aa)) folds into the NR LBD domain. The interval 673–926 (EIQLVPPLIN…MVKPLLFHKK (254 aa)) is AF2; mediates transcriptional activation. Residue arginine 759 participates in progesterone binding.

The protein belongs to the nuclear hormone receptor family. NR3 subfamily. As to quaternary structure, interacts with SMARD1 and UNC45A. Interacts with CUEDC2; the interaction promotes ubiquitination, decreases sumoylation, and represses transcriptional activity. Interacts with PIAS3; the interaction promotes sumoylation of PR in a hormone-dependent manner, inhibits DNA-binding, and alters nuclear export. Interacts with SP1; the interaction requires ligand-induced phosphorylation on Ser-294 by ERK1/2 MAPK. Interacts with PRMT2. Isoform A interacts with NCOR2. Isoform B (but not isoform A) interacts with NCOA2 and NCOA1. Isoform B (but not isoform A) interacts with KLF9. In terms of processing, phosphorylated on multiple serine sites. Several of these sites are hormone-dependent. Phosphorylation on Ser-294 is highly hormone-dependent and modulates ubiquitination and sumoylation on Lys-388. Phosphorylation on Ser-345 also requires induction by hormone. Basal phosphorylation on Ser-82, Ser-163, Ser-191 and Ser-400 is increased in response to progesterone and can be phosphorylated in vitro by the CDK2-A1 complex. Increased levels of phosphorylation on Ser-400 also in the presence of EGF, heregulin, IGF, PMA and FBS. Phosphorylation at this site by CDK2 is ligand-independent, and increases nuclear translocation and transcriptional activity. Phosphorylation at Ser-163 and Ser-294, but not at Ser-191, is impaired during the G(2)/M phase of the cell cycle. Phosphorylation on Ser-345 by ERK1/2 MAPK is required for interaction with SP1. Sumoylation is hormone-dependent and represses transcriptional activity. Sumoylation on all three sites is enhanced by PIAS3. Desumoylated by SENP1. Sumoylation on Lys-388, the main site of sumoylation, is repressed by ubiquitination on the same site, and modulated by phosphorylation at Ser-294. Post-translationally, ubiquitination is hormone-dependent and represses sumoylation on the same site. Promoted by MAPK-mediated phosphorylation on Ser-294. Ubiquitinated by UBR5, leading to its degradation: UBR5 specifically recognizes and binds ligand-bound PGR when it is not associated with coactivators (NCOAs). In presence of NCOAs, the UBR5-degron is not accessible, preventing its ubiquitination and degradation. In terms of processing, palmitoylated by ZDHHC7 and ZDHHC21. Palmitoylation is required for plasma membrane targeting and for rapid intracellular signaling via ERK and AKT kinases and cAMP generation. As to expression, expression of isoform A and isoform B in mammary epithelial cells is temporally and spatially separated during normal mammary gland development. Isoform A and isoform B are expressed in the pituitary. Isoform A and isoform B are differentially expressed in the ovary and oviduct, and the level of expression is dependent on both the cell type and estrous cycle stage.

It is found in the nucleus. The protein resides in the cytoplasm. Functionally, the steroid hormones and their receptors are involved in the regulation of eukaryotic gene expression and affect cellular proliferation and differentiation in target tissues. Depending on the isoform, progesterone receptor functions as a transcriptional activator or repressor. In terms of biological role, ligand-dependent transdominant repressor of steroid hormone receptor transcriptional activity including repression of its isoform B, MR and ER. Transrepressional activity may involve recruitment of corepressor NCOR2. Its function is as follows. Transcriptional activator of several progesteron-dependent promoters in a variety of cell types. Involved in activation of SRC-dependent MAPK signaling on hormone stimulation. In Mus musculus (Mouse), this protein is Progesterone receptor (Pgr).